Here is a 399-residue protein sequence, read N- to C-terminus: Centrosomal protein 43 (399 aa).

The LisH domain occupies aspartate 70–glutamine 102. Disordered stretches follow at residues glutamate 139–histidine 218 and asparagine 232–lysine 308. Position 143 is a phosphothreonine (threonine 143). Residues serine 152, serine 156, and serine 160 each carry the phosphoserine modification. The span at glycine 163–serine 172 shows a compositional bias: polar residues. Threonine 170 carries the phosphothreonine modification. Basic residues predominate over residues proline 175–serine 186. The residue at position 202 (serine 202) is a Phosphoserine. Positions serine 205–histidine 218 are enriched in low complexity. Position 234 is a phosphothreonine (threonine 234). The segment covering proline 245 to phenylalanine 256 has biased composition (acidic residues). Basic and acidic residues predominate over residues proline 259–lysine 275. A compositionally biased stretch (low complexity) spans alanine 286 to leucine 302. Phosphoserine occurs at positions 301 and 326. Positions threonine 331–isoleucine 353 are disordered. Tyrosine 337 is subject to Phosphotyrosine.

The protein belongs to the CEP43 family. Homodimer. Part of a ternary complex that contains CEP350, CEP43 and MAPRE1. Interacts directly with CEP350 and MAPRE1. Interacts with CEP19. Interacts (via N-terminus) with CEP350 (via C-terminus). As to expression, ubiquitous. Highly expressed in heart, liver, muscle, kidney, intestine, colon, adrenal gland, prostate, testis, and pancreas.

It is found in the cytoplasm. The protein localises to the cytoskeleton. It localises to the microtubule organizing center. The protein resides in the centrosome. Its subcellular location is the centriole. It is found in the cilium basal body. Its function is as follows. Required for anchoring microtubules to the centrosomes. Required for ciliation. The polypeptide is Centrosomal protein 43 (Homo sapiens (Human)).